The chain runs to 711 residues: F-box only protein 34 (711 aa).

Disordered regions lie at residues Met-1–Glu-36, Ser-249–Glu-271, Asp-337–Asp-372, and Tyr-494–Glu-529. Positions Gln-10–Gln-23 are enriched in basic and acidic residues. Positions Arg-354 to Gln-364 are enriched in basic and acidic residues. Positions Gln-572–Asp-624 constitute an F-box domain.

Directly interacts with SKP1 and CUL1.

Substrate-recognition component of the SCF (SKP1-CUL1-F-box protein)-type E3 ubiquitin ligase complex. This chain is F-box only protein 34 (FBXO34), found in Homo sapiens (Human).